Reading from the N-terminus, the 79-residue chain is MASSGKCVFLVFLCMVALLAPSEVHAKSMVEVNAAHKWYIVEGLCSKFPDCNKHCKEQKFPGGTCLKLGVNMMCTCIYS.

A signal peptide spans 1-26; that stretch reads MASSGKCVFLVFLCMVALLAPSEVHA. Disulfide bonds link Cys45/Cys65, Cys51/Cys74, and Cys55/Cys76.

It belongs to the DEFL family.

It localises to the secreted. In Arabidopsis thaliana (Mouse-ear cress), this protein is Putative defensin-like protein 29.